A 572-amino-acid polypeptide reads, in one-letter code: 2-succinyl-5-enolpyruvyl-6-hydroxy-3-cyclohexene-1-carboxylate synthase (572 aa).

This sequence belongs to the TPP enzyme family. MenD subfamily. As to quaternary structure, homodimer. It depends on Mg(2+) as a cofactor. Mn(2+) serves as cofactor. Requires thiamine diphosphate as cofactor.

It carries out the reaction isochorismate + 2-oxoglutarate + H(+) = 5-enolpyruvoyl-6-hydroxy-2-succinyl-cyclohex-3-ene-1-carboxylate + CO2. It participates in quinol/quinone metabolism; 1,4-dihydroxy-2-naphthoate biosynthesis; 1,4-dihydroxy-2-naphthoate from chorismate: step 2/7. It functions in the pathway quinol/quinone metabolism; menaquinone biosynthesis. Functionally, catalyzes the thiamine diphosphate-dependent decarboxylation of 2-oxoglutarate and the subsequent addition of the resulting succinic semialdehyde-thiamine pyrophosphate anion to isochorismate to yield 2-succinyl-5-enolpyruvyl-6-hydroxy-3-cyclohexene-1-carboxylate (SEPHCHC). This chain is 2-succinyl-5-enolpyruvyl-6-hydroxy-3-cyclohexene-1-carboxylate synthase, found in Shewanella amazonensis (strain ATCC BAA-1098 / SB2B).